A 100-amino-acid polypeptide reads, in one-letter code: Large ribosomal subunit protein bL27 (100 aa).

A propeptide spanning residues M1–F9 is cleaved from the precursor.

This sequence belongs to the bacterial ribosomal protein bL27 family. In terms of processing, the N-terminus is cleaved by ribosomal processing cysteine protease Prp.

The polypeptide is Large ribosomal subunit protein bL27 (Clostridium botulinum (strain Hall / ATCC 3502 / NCTC 13319 / Type A)).